The chain runs to 62 residues: Photosystem II reaction center protein Z (62 aa).

The next 2 helical transmembrane spans lie at 8–28 (LVLL…VVLA) and 41–61 (YTGA…NSLV).

This sequence belongs to the PsbZ family. In terms of assembly, PSII is composed of 1 copy each of membrane proteins PsbA, PsbB, PsbC, PsbD, PsbE, PsbF, PsbH, PsbI, PsbJ, PsbK, PsbL, PsbM, PsbT, PsbX, PsbY, PsbZ, Psb30/Ycf12, at least 3 peripheral proteins of the oxygen-evolving complex and a large number of cofactors. It forms dimeric complexes.

The protein resides in the plastid. Its subcellular location is the chloroplast thylakoid membrane. Functionally, may control the interaction of photosystem II (PSII) cores with the light-harvesting antenna, regulates electron flow through the 2 photosystem reaction centers. PSII is a light-driven water plastoquinone oxidoreductase, using light energy to abstract electrons from H(2)O, generating a proton gradient subsequently used for ATP formation. The protein is Photosystem II reaction center protein Z of Pyropia yezoensis (Susabi-nori).